We begin with the raw amino-acid sequence, 126 residues long: SGSCTVKTCWMRLPTFRTVGDFLKDRFDGASRVIYGNKGSNRASRVELHHLEPENPAHKPPSPHDLVYFEKSPNFCTYSGKTGTAGTAGRSCNSSSPALDGCELLCCGRGYRTRTQRVTERCNCTF.

Residue S1 is the site of O-palmitoleoyl serine; by PORCN attachment. C92 and C107 are joined by a disulfide. 2 N-linked (GlcNAc...) asparagine glycosylation sites follow: N93 and N123.

Belongs to the Wnt family. In terms of processing, palmitoleoylation is required for efficient binding to frizzled receptors. Palmitoleoylation is necessary for proper trafficking to cell surface. Depalmitoleoylated by NOTUM, leading to inhibit Wnt signaling pathway.

The protein resides in the secreted. The protein localises to the extracellular space. Its subcellular location is the extracellular matrix. Functionally, ligand for members of the frizzled family of seven transmembrane receptors. Acts in the canonical Wnt signaling pathway by promoting beta-catenin-dependent transcriptional activation. Plays an essential role in the development of the embryonic brain and central nervous system (CNS). Has a role in osteoblast function, bone development and bone homeostasis. The chain is Protein Wnt-1 (WNT-1) from Plestiodon skiltonianus (Western skink).